Reading from the N-terminus, the 533-residue chain is Probable dolichyl pyrophosphate Man9GlcNAc2 alpha-1,3-glucosyltransferase (533 aa).

The interval 1-20 (MPKKKPAKHSGEDDITIPVS) is disordered. 9 helical membrane passes run 42–64 (FLCISLFALLIRSAVTMYPYSGA), 149–169 (WTVLSSDAFIFFPAALFFVLV), 184–204 (WHIAMILLNPCLILIDHGHFQ), 214–234 (VGAIAAVLCESEVLTCVLFSL), 264–284 (ILSVIKLGIAVIVTFVIFWWP), 360–380 (GFLYGLLNSSMAFYLFSFQVH), 422–442 (LLIPYLTLSFLFTVIYHSPGN), 463–483 (VFLLRTHFFISVVLHVLYLTI), and 491–511 (FLFEALIMILCFSYFIMFAFY).

The protein belongs to the ALG6/ALG8 glucosyltransferase family.

The protein localises to the endoplasmic reticulum membrane. The catalysed reaction is an alpha-D-Man-(1-&gt;2)-alpha-D-Man-(1-&gt;2)-alpha-D-Man-(1-&gt;3)-[alpha-D-Man-(1-&gt;2)-alpha-D-Man-(1-&gt;3)-[alpha-D-Man-(1-&gt;2)-alpha-D-Man-(1-&gt;6)]-alpha-D-Man-(1-&gt;6)]-beta-D-Man-(1-&gt;4)-beta-D-GlcNAc-(1-&gt;4)-alpha-D-GlcNAc-diphospho-di-trans,poly-cis-dolichol + a di-trans,poly-cis-dolichyl beta-D-glucosyl phosphate = an alpha-D-Glc-(1-&gt;3)-alpha-D-Man-(1-&gt;2)-alpha-D-Man-(1-&gt;2)-alpha-D-Man-(1-&gt;3)-[alpha-D-Man-(1-&gt;2)-alpha-D-Man-(1-&gt;3)-[alpha-D-Man-(1-&gt;2)-alpha-D-Man-(1-&gt;6)]-alpha-D-Man-(1-&gt;6)]-beta-D-Man-(1-&gt;4)-beta-D-GlcNAc-(1-&gt;4)-alpha-D-GlcNAc-diphospho-di-trans,poly-cis-dolichol + a di-trans,poly-cis-dolichyl phosphate + H(+). It participates in protein modification; protein glycosylation. Its function is as follows. Adds the first glucose residue to the lipid-linked oligosaccharide precursor for N-linked glycosylation. Transfers glucose from dolichyl phosphate glucose (Dol-P-Glc) onto the lipid-linked oligosaccharide Man(9)GlcNAc(2)-PP-Dol. This chain is Probable dolichyl pyrophosphate Man9GlcNAc2 alpha-1,3-glucosyltransferase, found in Arabidopsis thaliana (Mouse-ear cress).